The following is a 557-amino-acid chain: DNA 3'-5' helicase XPB (557 aa).

The tract at residues 1–135 is required for protein stability or solubility; that stretch reads MTDGPLIVQS…APLLGTRIAP (135 aa). Positions 190–344 constitute a Helicase ATP-binding domain; the sequence is VDNFWNGGSG…DVFSLIGPKR (155 aa). 203–210 contributes to the ATP binding site; sequence LPCGAGKT. The DEAH box motif lies at 298 to 301; that stretch reads DEVH. The Helicase C-terminal domain occupies 398–544; sequence RVVEKLVAQH…AYRIVDADDI (147 aa).

Belongs to the helicase family. RAD25/XPB subfamily. As to quaternary structure, monomer. Mn(2+) serves as cofactor. Requires Mg(2+) as cofactor. The cofactor is Ca(2+).

The catalysed reaction is Couples ATP hydrolysis with the unwinding of duplex DNA by translocating in the 3'-5' direction.. It catalyses the reaction ATP + H2O = ADP + phosphate + H(+). In terms of biological role, ATP-dependent 3'-5' DNA helicase, unwinds 3'-overhangs, 3'- flaps, and splayed-arm DNA substrates but not 5'-overhangs or 5'-flap substrates. Requires ATP hydrolysis for activity; the ATPase activity is DNA-dependent and requires a minimum of 4 single-stranded nucleotides (nt) with 6-10 nt providing all necessary interactions for full processive unwinding. The ATPase prefers ATP over CTP or GTP, is almost inactive with TTP. This chain is DNA 3'-5' helicase XPB, found in Kineococcus radiotolerans (strain ATCC BAA-149 / DSM 14245 / SRS30216).